The sequence spans 431 residues: Glucose-1-phosphate adenylyltransferase (431 aa).

Beta-D-fructose 1,6-bisphosphate is bound at residue Lys39. AMP is bound by residues Arg40, His46, and Arg52. Tyr114 serves as a coordination point for alpha-D-glucose 1-phosphate. Arg130 serves as a coordination point for AMP. Residues Gly179, 194 to 195 (EK), and Ser212 contribute to the alpha-D-glucose 1-phosphate site. Glu370 and Arg386 together coordinate AMP. Beta-D-fructose 1,6-bisphosphate-binding positions include 419 to 423 (REMLR) and 429 to 431 (QER).

It belongs to the bacterial/plant glucose-1-phosphate adenylyltransferase family. In terms of assembly, homotetramer.

It carries out the reaction alpha-D-glucose 1-phosphate + ATP + H(+) = ADP-alpha-D-glucose + diphosphate. Its pathway is glycan biosynthesis; glycogen biosynthesis. Allosterically activated by fructose-1,6-bisphosphate (F16BP) and inhibited by AMP. Functionally, involved in the biosynthesis of ADP-glucose, a building block required for the elongation reactions to produce glycogen. Catalyzes the reaction between ATP and alpha-D-glucose 1-phosphate (G1P) to produce pyrophosphate and ADP-Glc. The polypeptide is Glucose-1-phosphate adenylyltransferase (Salmonella paratyphi C (strain RKS4594)).